A 480-amino-acid polypeptide reads, in one-letter code: MLLNILAIILVFVISSQSEAVIPGCDYFDTVDISHIPKLNDSYAYEELIIPAHLTGLYTFRQLADGSQEPVKSHLRACICKLKPCIRFCCPRNKMMPNSRCSDGLTENLKRINPYLKITLEDGTIGKYYLLTDMIVLRYEFRYCEKVVSVQEDQYKLYENGSFMIKPDVNWTLSKQWYCLHPRLEDPNSIWILEHVYIPKSMPAVPQVGTISMVGCILTIAVYLYIKKLRNLLGKCFICYVFCKFVQYLIWAGGDLNLWNNICSLAGYTNYFFALASHFWLSVMSHQIWKNLRLINRDERSYHFLIYNIYGWGTPAIMTAITYLVDWAWEDRPDKLNWIPGVGLYRCWINTYDWSAMIYLYGPMLILSLFNVVTFILTVNHIMKIKSSVKSSTQQQRKCIQNNDFLLYLRLSVMMGVTGISEVITYFVKRHKFWRQVLRVPNFFHLGSGIVVFVLFILKRSTFQMIMERISGPRRQQPAS.

Residues 1–20 (MLLNILAIILVFVISSQSEA) form the signal peptide. Topologically, residues 21–202 (VIPGCDYFDT…LEHVYIPKSM (182 aa)) are extracellular. Intrachain disulfides connect Cys-25–Cys-78, Cys-80–Cys-85, Cys-89–Cys-179, and Cys-90–Cys-101. Asn-40 carries an N-linked (GlcNAc...) asparagine glycan. N-linked (GlcNAc...) asparagine glycosylation is found at Asn-160 and Asn-170. A helical transmembrane segment spans residues 203–225 (PAVPQVGTISMVGCILTIAVYLY). The Cytoplasmic segment spans residues 226–231 (IKKLRN). A helical membrane pass occupies residues 232 to 254 (LLGKCFICYVFCKFVQYLIWAGG). The Extracellular portion of the chain corresponds to 255-263 (DLNLWNNIC). Residues 264 to 283 (SLAGYTNYFFALASHFWLSV) form a helical membrane-spanning segment. The Cytoplasmic segment spans residues 284-303 (MSHQIWKNLRLINRDERSYH). The chain crosses the membrane as a helical span at residues 304–326 (FLIYNIYGWGTPAIMTAITYLVD). Topologically, residues 327–356 (WAWEDRPDKLNWIPGVGLYRCWINTYDWSA) are extracellular. The helical transmembrane segment at 357–379 (MIYLYGPMLILSLFNVVTFILTV) threads the bilayer. The Cytoplasmic portion of the chain corresponds to 380–405 (NHIMKIKSSVKSSTQQQRKCIQNNDF). A helical transmembrane segment spans residues 406 to 428 (LLYLRLSVMMGVTGISEVITYFV). Topologically, residues 429 to 437 (KRHKFWRQV) are extracellular. A helical transmembrane segment spans residues 438–457 (LRVPNFFHLGSGIVVFVLFI). The Cytoplasmic segment spans residues 458 to 480 (LKRSTFQMIMERISGPRRQQPAS).

It belongs to the G-protein coupled receptor 2 family. Mth subfamily.

It localises to the cell membrane. The polypeptide is Probable G-protein coupled receptor Mth-like 6 (mthl6) (Drosophila melanogaster (Fruit fly)).